Reading from the N-terminus, the 60-residue chain is Large ribosomal subunit protein bL32 (60 aa).

The protein belongs to the bacterial ribosomal protein bL32 family.

The protein is Large ribosomal subunit protein bL32 of Streptococcus suis (strain 05ZYH33).